We begin with the raw amino-acid sequence, 119 residues long: Large ribosomal subunit protein bL20 (119 aa).

It belongs to the bacterial ribosomal protein bL20 family.

Its function is as follows. Binds directly to 23S ribosomal RNA and is necessary for the in vitro assembly process of the 50S ribosomal subunit. It is not involved in the protein synthesizing functions of that subunit. This chain is Large ribosomal subunit protein bL20, found in Xanthomonas oryzae pv. oryzae (strain PXO99A).